A 197-amino-acid chain; its full sequence is ATP-dependent Clp protease proteolytic subunit (197 aa).

Ser98 acts as the Nucleophile in catalysis. The active site involves His123.

It belongs to the peptidase S14 family. In terms of assembly, fourteen ClpP subunits assemble into 2 heptameric rings which stack back to back to give a disk-like structure with a central cavity, resembling the structure of eukaryotic proteasomes.

Its subcellular location is the cytoplasm. It carries out the reaction Hydrolysis of proteins to small peptides in the presence of ATP and magnesium. alpha-casein is the usual test substrate. In the absence of ATP, only oligopeptides shorter than five residues are hydrolyzed (such as succinyl-Leu-Tyr-|-NHMec, and Leu-Tyr-Leu-|-Tyr-Trp, in which cleavage of the -Tyr-|-Leu- and -Tyr-|-Trp bonds also occurs).. In terms of biological role, cleaves peptides in various proteins in a process that requires ATP hydrolysis. Has a chymotrypsin-like activity. Plays a major role in the degradation of misfolded proteins. This Limosilactobacillus reuteri (strain DSM 20016) (Lactobacillus reuteri) protein is ATP-dependent Clp protease proteolytic subunit.